We begin with the raw amino-acid sequence, 285 residues long: UPF0354 protein SA1564 (285 aa).

The protein belongs to the UPF0354 family.

The polypeptide is UPF0354 protein SA1564 (Staphylococcus aureus (strain N315)).